A 242-amino-acid polypeptide reads, in one-letter code: Phosphoribosylaminoimidazole-succinocarboxamide synthase (242 aa).

It belongs to the SAICAR synthetase family.

It carries out the reaction 5-amino-1-(5-phospho-D-ribosyl)imidazole-4-carboxylate + L-aspartate + ATP = (2S)-2-[5-amino-1-(5-phospho-beta-D-ribosyl)imidazole-4-carboxamido]succinate + ADP + phosphate + 2 H(+). It participates in purine metabolism; IMP biosynthesis via de novo pathway; 5-amino-1-(5-phospho-D-ribosyl)imidazole-4-carboxamide from 5-amino-1-(5-phospho-D-ribosyl)imidazole-4-carboxylate: step 1/2. The polypeptide is Phosphoribosylaminoimidazole-succinocarboxamide synthase (Magnetococcus marinus (strain ATCC BAA-1437 / JCM 17883 / MC-1)).